A 285-amino-acid chain; its full sequence is 4-diphosphocytidyl-2-C-methyl-D-erythritol kinase (285 aa).

Lys-14 is a catalytic residue. Pro-97–Ser-107 is a binding site for ATP. Asp-139 is a catalytic residue.

This sequence belongs to the GHMP kinase family. IspE subfamily.

The enzyme catalyses 4-CDP-2-C-methyl-D-erythritol + ATP = 4-CDP-2-C-methyl-D-erythritol 2-phosphate + ADP + H(+). The protein operates within isoprenoid biosynthesis; isopentenyl diphosphate biosynthesis via DXP pathway; isopentenyl diphosphate from 1-deoxy-D-xylulose 5-phosphate: step 3/6. Functionally, catalyzes the phosphorylation of the position 2 hydroxy group of 4-diphosphocytidyl-2C-methyl-D-erythritol. The sequence is that of 4-diphosphocytidyl-2-C-methyl-D-erythritol kinase from Tolumonas auensis (strain DSM 9187 / NBRC 110442 / TA 4).